Here is a 682-residue protein sequence, read N- to C-terminus: Methionine--tRNA ligase (682 aa).

The 'HIGH' region motif lies at P15 to H25. C146, C149, C159, and C162 together coordinate Zn(2+). A 'KMSKS' region motif is present at residues K331–S335. Residue K334 coordinates ATP. One can recognise a tRNA-binding domain in the interval D580 to K682.

The protein belongs to the class-I aminoacyl-tRNA synthetase family. MetG type 1 subfamily. Homodimer. Zn(2+) is required as a cofactor.

Its subcellular location is the cytoplasm. The enzyme catalyses tRNA(Met) + L-methionine + ATP = L-methionyl-tRNA(Met) + AMP + diphosphate. Its function is as follows. Is required not only for elongation of protein synthesis but also for the initiation of all mRNA translation through initiator tRNA(fMet) aminoacylation. This Pasteurella multocida (strain Pm70) protein is Methionine--tRNA ligase.